Consider the following 51-residue polypeptide: MSKHKSLGKKLRLGKALKRNSPIPAWVIIKTQAEIRFNPLRRNWRRNNLKV.

Belongs to the eukaryotic ribosomal protein eL39 family.

In terms of biological role, binds specifically to a region in 26S rRNA near the subunit interface. In Sulfolobus acidocaldarius (strain ATCC 33909 / DSM 639 / JCM 8929 / NBRC 15157 / NCIMB 11770), this protein is Large ribosomal subunit protein eL39 (rpl39e).